The following is a 25-amino-acid chain: Ocellatin-P1 (25 aa).

Leucine 25 carries the leucine amide modification.

In terms of tissue distribution, expressed by the skin glands.

Its subcellular location is the secreted. Antibacterial peptide that inhibits reference strains of both Gram-negative bacteria (E.coli, E.cloacae, K.pneumoniae, P.aeruginosa) and Gram-positive bacteria (S.aureus, S.epidermidis, E.faecalis, Streptococcus group B) with relatively low potencies (MIC=25-200 uM). The peptide shows very low hemolytic activity against human erythrocytes. Wheel projection demonstrates the amphipathicity of the alpha-helices is low which may explain the low antibacterial potency. This is Ocellatin-P1 from Leptodactylus pentadactylus (Smokey jungle frog).